A 258-amino-acid polypeptide reads, in one-letter code: Acyl-[acyl-carrier-protein]--UDP-N-acetylglucosamine O-acyltransferase (258 aa).

The protein belongs to the transferase hexapeptide repeat family. LpxA subfamily. In terms of assembly, homotrimer.

It is found in the cytoplasm. It carries out the reaction a (3R)-hydroxyacyl-[ACP] + UDP-N-acetyl-alpha-D-glucosamine = a UDP-3-O-[(3R)-3-hydroxyacyl]-N-acetyl-alpha-D-glucosamine + holo-[ACP]. Its pathway is glycolipid biosynthesis; lipid IV(A) biosynthesis; lipid IV(A) from (3R)-3-hydroxytetradecanoyl-[acyl-carrier-protein] and UDP-N-acetyl-alpha-D-glucosamine: step 1/6. Functionally, involved in the biosynthesis of lipid A, a phosphorylated glycolipid that anchors the lipopolysaccharide to the outer membrane of the cell. This chain is Acyl-[acyl-carrier-protein]--UDP-N-acetylglucosamine O-acyltransferase, found in Azotobacter vinelandii (strain DJ / ATCC BAA-1303).